We begin with the raw amino-acid sequence, 445 residues long: Exodeoxyribonuclease 7 large subunit (445 aa).

It belongs to the XseA family. Heterooligomer composed of large and small subunits.

Its subcellular location is the cytoplasm. The catalysed reaction is Exonucleolytic cleavage in either 5'- to 3'- or 3'- to 5'-direction to yield nucleoside 5'-phosphates.. Bidirectionally degrades single-stranded DNA into large acid-insoluble oligonucleotides, which are then degraded further into small acid-soluble oligonucleotides. The polypeptide is Exodeoxyribonuclease 7 large subunit (Delftia acidovorans (strain DSM 14801 / SPH-1)).